Here is a 195-residue protein sequence, read N- to C-terminus: Peptidyl-tRNA hydrolase (195 aa).

TRNA is bound at residue tyrosine 17. Histidine 22 (proton acceptor) is an active-site residue. 3 residues coordinate tRNA: tyrosine 68, asparagine 70, and asparagine 116.

It belongs to the PTH family. In terms of assembly, monomer.

It localises to the cytoplasm. The enzyme catalyses an N-acyl-L-alpha-aminoacyl-tRNA + H2O = an N-acyl-L-amino acid + a tRNA + H(+). In terms of biological role, hydrolyzes ribosome-free peptidyl-tRNAs (with 1 or more amino acids incorporated), which drop off the ribosome during protein synthesis, or as a result of ribosome stalling. Catalyzes the release of premature peptidyl moieties from peptidyl-tRNA molecules trapped in stalled 50S ribosomal subunits, and thus maintains levels of free tRNAs and 50S ribosomes. The protein is Peptidyl-tRNA hydrolase of Shewanella oneidensis (strain ATCC 700550 / JCM 31522 / CIP 106686 / LMG 19005 / NCIMB 14063 / MR-1).